The chain runs to 300 residues: Acetyl-coenzyme A carboxylase carboxyl transferase subunit beta 1 (300 aa).

The CoA carboxyltransferase N-terminal domain occupies 26–294 (MWVKCPSCGD…HTSAAQHVPA (269 aa)). Residues cysteine 30, cysteine 33, cysteine 49, and cysteine 51 each coordinate Zn(2+). A C4-type zinc finger spans residues 30-51 (CPSCGDLIYTRQFSDNLKVCKC).

Belongs to the AccD/PCCB family. As to quaternary structure, acetyl-CoA carboxylase is a heterohexamer composed of biotin carboxyl carrier protein (AccB), biotin carboxylase (AccC) and two subunits each of ACCase subunit alpha (AccA) and ACCase subunit beta (AccD). Zn(2+) serves as cofactor.

The protein resides in the cytoplasm. It carries out the reaction N(6)-carboxybiotinyl-L-lysyl-[protein] + acetyl-CoA = N(6)-biotinyl-L-lysyl-[protein] + malonyl-CoA. It participates in lipid metabolism; malonyl-CoA biosynthesis; malonyl-CoA from acetyl-CoA: step 1/1. Its function is as follows. Component of the acetyl coenzyme A carboxylase (ACC) complex. Biotin carboxylase (BC) catalyzes the carboxylation of biotin on its carrier protein (BCCP) and then the CO(2) group is transferred by the transcarboxylase to acetyl-CoA to form malonyl-CoA. The protein is Acetyl-coenzyme A carboxylase carboxyl transferase subunit beta 1 of Roseiflexus sp. (strain RS-1).